The chain runs to 193 residues: Ion-translocating oxidoreductase complex subunit A (193 aa).

Transmembrane regions (helical) follow at residues 5-25, 47-67, 72-92, 102-122, 134-154, and 171-191; these read FFFI…FLGL, FVVV…LLPF, LRII…EIIL, ILGI…IPLF, ILYA…FSSI, and PIVL…KGLV.

The protein belongs to the NqrDE/RnfAE family. As to quaternary structure, the complex is composed of six subunits: RnfA, RnfB, RnfC, RnfD, RnfE and RnfG.

The protein resides in the cell inner membrane. In terms of biological role, part of a membrane-bound complex that couples electron transfer with translocation of ions across the membrane. This is Ion-translocating oxidoreductase complex subunit A from Buchnera aphidicola subsp. Schizaphis graminum (strain Sg).